A 398-amino-acid polypeptide reads, in one-letter code: Argininosuccinate synthase (398 aa).

Residue 9–17 (AYSGGLDTS) participates in ATP binding. Residues tyrosine 87 and serine 92 each coordinate L-citrulline. An ATP-binding site is contributed by glycine 117. Threonine 119, asparagine 123, and aspartate 124 together coordinate L-aspartate. Asparagine 123 lines the L-citrulline pocket. 5 residues coordinate L-citrulline: arginine 127, serine 176, serine 185, glutamate 261, and tyrosine 273.

Belongs to the argininosuccinate synthase family. Type 1 subfamily. In terms of assembly, homotetramer.

Its subcellular location is the cytoplasm. The enzyme catalyses L-citrulline + L-aspartate + ATP = 2-(N(omega)-L-arginino)succinate + AMP + diphosphate + H(+). Its pathway is amino-acid biosynthesis; L-arginine biosynthesis; L-arginine from L-ornithine and carbamoyl phosphate: step 2/3. The sequence is that of Argininosuccinate synthase from Clostridium tetani (strain Massachusetts / E88).